We begin with the raw amino-acid sequence, 317 residues long: Taste receptor type 2 member 7 (317 aa).

Residues 1–9 (MTDKVQTTL) are Extracellular-facing. The helical transmembrane segment at 10-30 (LFLAIGEFSVGILGNAFIGLV) threads the bilayer. At 31–55 (NCMDWVKKRKIASIDLILTSLAISR) the chain is on the cytoplasmic side. A helical transmembrane segment spans residues 56–76 (ICLLCVILLDCFMLVLYPDVY). Residues 77–94 (ATGKQMRIIDFFWTLTNH) lie on the Extracellular side of the membrane. A helical transmembrane segment spans residues 95-115 (LSIWFATCLSIYYFFKIANFF). At 116–128 (HPLFLWMKWRIDR) the chain is on the cytoplasmic side. Residues 129-149 (VISWILLGCMVLSVFINLPAT) form a helical membrane-spanning segment. Over 150–187 (ENLNADFRRCVKAKRKTNLTWSCRVTKAQHASTKLFLN) the chain is Extracellular. Asparagine 167 carries N-linked (GlcNAc...) asparagine glycosylation. Residues 188-208 (LVTLLPFSVCLVSFFLLILSL) form a helical membrane-spanning segment. Topologically, residues 209-235 (WRHIRRMQLSATGCRDPSTEAHVRALK) are cytoplasmic. The helical transmembrane segment at 236–256 (AVISFLFLFIAYYLSFLIATS) threads the bilayer. Residues 257-266 (SYFIPETELA) lie on the Extracellular side of the membrane. The helical transmembrane segment at 267 to 287 (VIFGEFIALIYPSSHSFILIL) threads the bilayer. Residues 288 to 317 (GNNKLRRASLKVLWTVMSILKGRKFQQKQI) lie on the Cytoplasmic side of the membrane.

This sequence belongs to the G-protein coupled receptor T2R family.

It is found in the membrane. In terms of biological role, gustducin-coupled receptor implicated in the perception of bitter compounds in the oral cavity and the gastrointestinal tract. Signals through PLCB2 and the calcium-regulated cation channel TRPM5. The protein is Taste receptor type 2 member 7 (TAS2R7) of Papio hamadryas (Hamadryas baboon).